A 100-amino-acid chain; its full sequence is Protein SAMBA (100 aa).

The tract at residues 1–40 is disordered; it reads MNGASPAHSLVSTTAVAGGGGSSGAAAGLDDFHFPPDIPS.

As to quaternary structure, interacts with CDC27B and CYCA2-3. Expressed in embryos, germinating seeds, hypocotyls and pollen grains.

In terms of biological role, plays an important role in organ size control. Acts as negative regulator of the anaphase-promoting complex/cyclosome (APC/C). Regulates cell proliferation during early development by targeting CYCA2-3 for APC/C-mediated degradation. Required for mitosis I during pollen microspore development. The protein is Protein SAMBA of Arabidopsis thaliana (Mouse-ear cress).